The following is a 194-amino-acid chain: MSNITITEAAQTHFANLLGQQPDGTNIRVFVVNPGTQNAECGVSYCPPEAVEATDTEIPYQSFSAYVDELSLPFLEDAEIDYVTDKMGSQLTLKAPNAKMRKVADDAPLLERVEYAIQTQVNPQLAGHGGHVKLMEITDAGVAIVAFGGGCNGCSMVDVTLKEGIEKELLQQFSGELTAVRDATEHDRGDHSYY.

[4Fe-4S] cluster-binding residues include C151 and C154.

The protein belongs to the NfuA family. Homodimer. [4Fe-4S] cluster is required as a cofactor.

In terms of biological role, involved in iron-sulfur cluster biogenesis. Binds a 4Fe-4S cluster, can transfer this cluster to apoproteins, and thereby intervenes in the maturation of Fe/S proteins. Could also act as a scaffold/chaperone for damaged Fe/S proteins. This Vibrio vulnificus (strain CMCP6) protein is Fe/S biogenesis protein NfuA.